The chain runs to 223 residues: Ion-translocating oxidoreductase complex subunit E (223 aa).

Transmembrane regions (helical) follow at residues Ser-17–Ala-37, Ile-38–Leu-58, Ile-68–Ala-88, Phe-91–Val-111, Val-124–Ile-144, Phe-156–Ile-176, and Thr-181–Phe-201.

The protein belongs to the NqrDE/RnfAE family. The complex is composed of six subunits: RnfA, RnfB, RnfC, RnfD, RnfE and RnfG.

It is found in the cell inner membrane. In terms of biological role, part of a membrane-bound complex that couples electron transfer with translocation of ions across the membrane. This Buchnera aphidicola subsp. Schizaphis graminum (strain Sg) protein is Ion-translocating oxidoreductase complex subunit E.